Consider the following 177-residue polypeptide: Phycocyanin PC645 beta subunit (177 aa).

Tyr-18 is a mesobiliverdin binding site. Residues Lys-28, Asn-35, and Asp-39 each contribute to the (2R,3E)-phycocyanobilin site. The 15,16-dihydrobiliverdin site is built by Cys-50, Asp-54, and Cys-61. Residues Asn-72, Arg-77, Cys-82, Arg-84, and Asp-85 each coordinate (2R,3E)-phycocyanobilin. Gln-148 is a binding site for 15,16-dihydrobiliverdin. (2R,3E)-phycocyanobilin-binding residues include Pro-154, Gly-156, and Cys-158.

It belongs to the phycobiliprotein family. As to quaternary structure, heterotetramer of 2 different alpha chains and 2 identical beta chains which form 2 alpha-beta heterodimers within the heterotetramer. Post-translationally, contains two phycocyanobilin chromophores, one mesobiliverdin chromophore and one 15,16-dihydrobiliverdin chromophore with binding mediated by both the alpha and beta subunits.

Its subcellular location is the plastid. The protein resides in the chloroplast thylakoid membrane. Light-harvesting photosynthetic tetrapyrrole chromophore-protein from the phycobiliprotein complex. The polypeptide is Phycocyanin PC645 beta subunit (Chroomonas sp. (strain CCMP270)).